A 494-amino-acid chain; its full sequence is Aldehyde dehydrogenase family 7 member A1 (494 aa).

247–252 (GSSKVG) contributes to the NAD(+) binding site. Residue glutamate 269 is the Proton acceptor of the active site. The Nucleophile role is filled by cysteine 303.

The protein belongs to the aldehyde dehydrogenase family. In terms of assembly, homotetramer.

It catalyses the reaction an aldehyde + NAD(+) + H2O = a carboxylate + NADH + 2 H(+). This chain is Aldehyde dehydrogenase family 7 member A1 (BTG-26), found in Brassica napus (Rape).